Consider the following 149-residue polypeptide: SsrA-binding protein (149 aa).

Positions 121–149 (GKGEHDKRDTIKDREGKREVERAMKSRSR) are disordered.

Belongs to the SmpB family.

The protein resides in the cytoplasm. Required for rescue of stalled ribosomes mediated by trans-translation. Binds to transfer-messenger RNA (tmRNA), required for stable association of tmRNA with ribosomes. tmRNA and SmpB together mimic tRNA shape, replacing the anticodon stem-loop with SmpB. tmRNA is encoded by the ssrA gene; the 2 termini fold to resemble tRNA(Ala) and it encodes a 'tag peptide', a short internal open reading frame. During trans-translation Ala-aminoacylated tmRNA acts like a tRNA, entering the A-site of stalled ribosomes, displacing the stalled mRNA. The ribosome then switches to translate the ORF on the tmRNA; the nascent peptide is terminated with the 'tag peptide' encoded by the tmRNA and targeted for degradation. The ribosome is freed to recommence translation, which seems to be the essential function of trans-translation. The protein is SsrA-binding protein of Polaromonas sp. (strain JS666 / ATCC BAA-500).